The following is a 472-amino-acid chain: Glutamate--tRNA ligase (472 aa).

The 'HIGH' region signature appears at 9 to 19; that stretch reads PSPTGPLHIGS. The short motif at 237-241 is the 'KMSKS' region element; sequence KLSKR. Lysine 240 lines the ATP pocket.

The protein belongs to the class-I aminoacyl-tRNA synthetase family. Glutamate--tRNA ligase type 1 subfamily. In terms of assembly, monomer.

The protein localises to the cytoplasm. It carries out the reaction tRNA(Glu) + L-glutamate + ATP = L-glutamyl-tRNA(Glu) + AMP + diphosphate. Catalyzes the attachment of glutamate to tRNA(Glu) in a two-step reaction: glutamate is first activated by ATP to form Glu-AMP and then transferred to the acceptor end of tRNA(Glu). This is Glutamate--tRNA ligase from Buchnera aphidicola subsp. Baizongia pistaciae (strain Bp).